The following is a 470-amino-acid chain: Chromosomal replication initiator protein DnaA (470 aa).

A domain I, interacts with DnaA modulators region spans residues 1 to 89 (MIESNHVVLW…YNVMVDKTSI (89 aa)). The domain II stretch occupies residues 89–130 (IPNQTVNLEASNRSTAVTPKSIVGGNKAPSFLKAPAVQDLDP). Residues 131–348 (HLNPNYNFEN…GIVIAIMARS (218 aa)) are domain III, AAA+ region. 4 residues coordinate ATP: Gly-176, Gly-178, Lys-179, and Thr-180. The tract at residues 349 to 470 (TIFNKEIDLD…EIESLLKKKA (122 aa)) is domain IV, binds dsDNA.

This sequence belongs to the DnaA family. In terms of assembly, oligomerizes as a right-handed, spiral filament on DNA at oriC.

It localises to the cytoplasm. Plays an essential role in the initiation and regulation of chromosomal replication. ATP-DnaA binds to the origin of replication (oriC) to initiate formation of the DNA replication initiation complex once per cell cycle. Binds the DnaA box (a 9 base pair repeat at the origin) and separates the double-stranded (ds)DNA. Forms a right-handed helical filament on oriC DNA; dsDNA binds to the exterior of the filament while single-stranded (ss)DNA is stabiized in the filament's interior. The ATP-DnaA-oriC complex binds and stabilizes one strand of the AT-rich DNA unwinding element (DUE), permitting loading of DNA polymerase. After initiation quickly degrades to an ADP-DnaA complex that is not apt for DNA replication. Binds acidic phospholipids. The polypeptide is Chromosomal replication initiator protein DnaA (Bacteroides thetaiotaomicron (strain ATCC 29148 / DSM 2079 / JCM 5827 / CCUG 10774 / NCTC 10582 / VPI-5482 / E50)).